The chain runs to 226 residues: Adenylate kinase (226 aa).

12 to 17 lines the ATP pocket; it reads GSGKGT. Residues 32–61 are NMP; the sequence is ESGAIFREHIGGGTELGLKAKEYIERGDLV. Residues Ser33, Arg38, 59-61, 87-90, and Gln94 contribute to the AMP site; these read DLV and GFPR. Positions 128-171 are LID; it reads GRRLCVNDNNHPNHIAFEAIKPVEKDGKLVCRVCGGDLKTRPDD. Position 129 (Arg129) interacts with ATP. The AMP site is built by Arg168 and Arg180. Ala213 is a binding site for ATP.

It belongs to the adenylate kinase family. Monomer.

It localises to the cytoplasm. The catalysed reaction is AMP + ATP = 2 ADP. It participates in purine metabolism; AMP biosynthesis via salvage pathway; AMP from ADP: step 1/1. Its function is as follows. Catalyzes the reversible transfer of the terminal phosphate group between ATP and AMP. Plays an important role in cellular energy homeostasis and in adenine nucleotide metabolism. This is Adenylate kinase from Desulfotalea psychrophila (strain LSv54 / DSM 12343).